We begin with the raw amino-acid sequence, 113 residues long: Nitrogenase-stabilizing/protective protein NifW (113 aa).

The protein belongs to the NifW family. Homotrimer; associates with NifD.

Its function is as follows. May protect the nitrogenase Fe-Mo protein from oxidative damage. This is Nitrogenase-stabilizing/protective protein NifW from Polaromonas naphthalenivorans (strain CJ2).